We begin with the raw amino-acid sequence, 167 residues long: Seroin (167 aa).

The first 17 residues, 1–17 (MATKILIFLSFVALSSA), serve as a signal peptide directing secretion. Residue N26 is glycosylated (N-linked (GlcNAc...) asparagine). 5 consecutive repeat copies span residues 38 to 46 (PPLPQPPPL), 56 to 64 (PPLPQPPPL), 76 to 78 (PPI), 79 to 81 (PPI), and 82 to 84 (PPI). Residues 145–167 (VNETIVGDNPPKFEESRKESSSN) are disordered. N-linked (GlcNAc...) asparagine glycosylation is present at N146. The span at 155 to 167 (PKFEESRKESSSN) shows a compositional bias: basic and acidic residues.

Produced by both the posterior (PSG) and middle (MSG) sections of silk glands.

It is found in the secreted. The protein is Seroin of Galleria mellonella (Greater wax moth).